A 419-amino-acid chain; its full sequence is Tyrosine--tRNA ligase (419 aa).

Tyr-34 lines the L-tyrosine pocket. Positions 39-48 (PTADSLHLGN) match the 'HIGH' region motif. 2 residues coordinate L-tyrosine: Tyr-169 and Gln-173. A 'KMSKS' region motif is present at residues 229–233 (KFGKS). Lys-232 lines the ATP pocket. Residues 353-419 (LTLVELLISA…GKKKNFVLTY (67 aa)) enclose the S4 RNA-binding domain.

Belongs to the class-I aminoacyl-tRNA synthetase family. TyrS type 1 subfamily. Homodimer.

It localises to the cytoplasm. The enzyme catalyses tRNA(Tyr) + L-tyrosine + ATP = L-tyrosyl-tRNA(Tyr) + AMP + diphosphate + H(+). Catalyzes the attachment of tyrosine to tRNA(Tyr) in a two-step reaction: tyrosine is first activated by ATP to form Tyr-AMP and then transferred to the acceptor end of tRNA(Tyr). This is Tyrosine--tRNA ligase from Lactococcus lactis subsp. lactis (strain IL1403) (Streptococcus lactis).